Reading from the N-terminus, the 332-residue chain is MSLKEKLIEKVHTEEHPHAHNKITVVGVGAVGMACAISILMKDLADELALVDVMEDKLKGEMLDLQHGSLFLKTPKIVSGKDYAVTAHSKLVIITAGARQQEGESRLNLVQRNVNIFKFIIPNVVKYSPDCKLLVVSNPVDILTYVAWKISGFPKHRVIGSGCNLDSARFRHLMGERLHINPLSCHGWIVGEHGDSSVPVWSGVNVAGVSLKSLHPEMGADGDKENWKDVHKQVVESAYEVIKLKGYTSWAIGLSVADLAETVMKNLRRVHPVSTMVKGMHGIKDDVFLSVPCVLGYSGITDVVKMTLKPEEEDKLKKSADTLWGIEKELQF.

NAD(+) contacts are provided by residues 29–57 and Arg99; that span reads GAVG…MEDK. Arg106, Asn138, and Arg169 together coordinate substrate. NAD(+) is bound at residue Asn138. Residue His193 is the Proton acceptor of the active site. Position 248 (Thr248) interacts with substrate.

This sequence belongs to the LDH/MDH superfamily. LDH family. As to quaternary structure, homotetramer.

Its subcellular location is the cytoplasm. It catalyses the reaction (S)-lactate + NAD(+) = pyruvate + NADH + H(+). It functions in the pathway fermentation; pyruvate fermentation to lactate; (S)-lactate from pyruvate: step 1/1. Functionally, interconverts simultaneously and stereospecifically pyruvate and lactate with concomitant interconversion of NADH and NAD(+). The protein is L-lactate dehydrogenase A chain (LDHA) of Sceloporus undulatus (Eastern fence lizard).